The sequence spans 501 residues: WD repeat-containing protein wdr-5.3 (501 aa).

Disordered stretches follow at residues 1–35 (MNPERQETISPKNVPFQPVPTPNQQSLQSRMLESN), 58–85 (PIGVPQTARPPSNQSPHPNPPGYPYQSH), and 155–197 (KSAE…ITKK). Residues 22-35 (PNQQSLQSRMLESN) are compositionally biased toward polar residues. The span at 167 to 177 (SITTKPTSTIQ) shows a compositional bias: polar residues. 7 WD repeats span residues 211 to 241 (GHTKSVSVIKFSYCGKYLGTGSADKQIKVWN), 253 to 283 (SHQLGINDFSWSSNSQFIASASDDTTVKIFD), 295 to 325 (GHTNYVFCCSFNPQSSLIASAGFDETVRVWD), 337 to 367 (AHSDPITSISYNHDGNTMATSSYDGCIRVWD), 381 to 410 (DHAPVTFVCFSPNGKYLLSAQLDSSLKLWD), 422 to 455 (GHKNKKYCLFANMSVPLGKHIISGSEDGRILVWS), and 467 to 499 (GHTTPVLATDSHPTLNIIASGGLEPDNVIRIWR).

It belongs to the WD repeat WDR5/wds family.

Not required for methylation of histone H3 'Lys-4'. The polypeptide is WD repeat-containing protein wdr-5.3 (wdr-5.3) (Caenorhabditis elegans).